We begin with the raw amino-acid sequence, 101 residues long: NAD(P)H-quinone oxidoreductase subunit 4L, chloroplastic (101 aa).

3 helical membrane passes run 2–22 (MLEY…YGLI), 32–52 (MCLE…SDFF), and 61–81 (IFSI…PAIV).

Belongs to the complex I subunit 4L family. As to quaternary structure, NDH is composed of at least 16 different subunits, 5 of which are encoded in the nucleus.

It is found in the plastid. The protein localises to the chloroplast thylakoid membrane. It carries out the reaction a plastoquinone + NADH + (n+1) H(+)(in) = a plastoquinol + NAD(+) + n H(+)(out). It catalyses the reaction a plastoquinone + NADPH + (n+1) H(+)(in) = a plastoquinol + NADP(+) + n H(+)(out). In terms of biological role, NDH shuttles electrons from NAD(P)H:plastoquinone, via FMN and iron-sulfur (Fe-S) centers, to quinones in the photosynthetic chain and possibly in a chloroplast respiratory chain. The immediate electron acceptor for the enzyme in this species is believed to be plastoquinone. Couples the redox reaction to proton translocation, and thus conserves the redox energy in a proton gradient. The polypeptide is NAD(P)H-quinone oxidoreductase subunit 4L, chloroplastic (Populus trichocarpa (Western balsam poplar)).